The following is a 144-amino-acid chain: MQLNDLRSAPGARREKHRPGRGIGSGLGKTGGRGHKGLTSRSGGKVAPGFEGGQQPLHRRLPKFGFVSLKAMDRAEVRTSELAKVEGDVVSLQTLKDANLINQHVQRVKVMLSGEVGRAVTLKGIAATKGARAAIEAAGGKFED.

Positions 1–57 are disordered; it reads MQLNDLRSAPGARREKHRPGRGIGSGLGKTGGRGHKGLTSRSGGKVAPGFEGGQQPL. Over residues 21–31 the composition is skewed to gly residues; it reads RGIGSGLGKTG.

Belongs to the universal ribosomal protein uL15 family. Part of the 50S ribosomal subunit.

Binds to the 23S rRNA. The chain is Large ribosomal subunit protein uL15 from Pseudomonas aeruginosa (strain LESB58).